The chain runs to 393 residues: S-adenosylmethionine synthase 1 (393 aa).

Residue Glu-9 coordinates Mg(2+). His-15 is a binding site for ATP. Glu-43 contacts K(+). L-methionine is bound by residues Glu-56 and Gln-99. ATP-binding positions include 167–169, 235–238, Asp-246, 252–253, Ala-269, Lys-273, and Lys-277; these read DGK, SGRF, and RK. Residue Asp-246 participates in L-methionine binding. Position 277 (Lys-277) interacts with L-methionine.

It belongs to the AdoMet synthase family. Homotetramer. The cofactor is Mn(2+). It depends on Mg(2+) as a cofactor. Requires Co(2+) as cofactor. K(+) serves as cofactor. As to expression, mostly expressed in stems.

It localises to the cytoplasm. It catalyses the reaction L-methionine + ATP + H2O = S-adenosyl-L-methionine + phosphate + diphosphate. The protein operates within amino-acid biosynthesis; S-adenosyl-L-methionine biosynthesis; S-adenosyl-L-methionine from L-methionine: step 1/1. In terms of biological role, catalyzes the formation of S-adenosylmethionine from methionine and ATP. The reaction comprises two steps that are both catalyzed by the same enzyme: formation of S-adenosylmethionine (AdoMet) and triphosphate, and subsequent hydrolysis of the triphosphate. The protein is S-adenosylmethionine synthase 1 (SAM1) of Solanum lycopersicum (Tomato).